The following is a 76-amino-acid chain: Putative antitoxin VapB2 (76 aa).

It belongs to the UPF0330 family.

In terms of biological role, possibly the antitoxin component of a type II toxin-antitoxin (TA) system. Its cognate toxin is VapC2 (Potential). The protein is Putative antitoxin VapB2 (vapB2) of Pyrococcus abyssi (strain GE5 / Orsay).